Here is a 526-residue protein sequence, read N- to C-terminus: MARETEFNDKSPSSTDDGMSQSHFSDKLKNLFHFRRNRAATVSTSVRNDQRDNDSDDSTFDINVNQLNELDLNDSSDQLDSRPSLRRVSSAPDSHKGVEAPPPRPLINMSNIRKAQVKILKNPGNYIFGRTEYGKRTYSGNSTKISRVEVTPHSFEKIRLLGQGDVGKVYLVRQKSNHRLFAMKILNKREMIKRHKVNRVLAEQEILTKSKHPFIVTLYHSFQSRDYLYLCMEYCAGGEFFRALHSLPKHILPEKDACFYAAEVTAALEYLHLMGFIYRDLKPENILLHQSGHIMLSDFDLSKPISIVTHPTVVLPKHSTFSQEKPALDTNSYFSNFRTNSFVGTEEYIAPEVIRSCGHTVAVDWWTLGIFIYEILYGTTPFKGKNRHATFSNILYSDVSFPEYHGAPNVSSTCKSLIRRLLVKDESKRCGSVAGASDIKQHPFFRHIQWALLRSMKPPIIPKIEDGMEAVEPSDNDNEEEDFLNSQYLISANLPAVDMHSSTPVNEQSNPFDSFSSVTLHHAGDE.

2 disordered regions span residues 1-24 (MARE…QSHF) and 39-106 (AATV…PRPL). Residues 10-23 (KSPSSTDDGMSQSH) show a composition bias toward polar residues. Residues 65–78 (NQLNELDLNDSSDQ) show a composition bias toward low complexity. Residue S154 is modified to Phosphoserine. Residues 155 to 445 (FEKIRLLGQG…ASDIKQHPFF (291 aa)) form the Protein kinase domain. ATP-binding positions include 161–169 (LGQGDVGKV) and K184. Residue D280 is the Proton acceptor of the active site. T339 carries the phosphothreonine modification. A Phosphoserine modification is found at S341. Y348 bears the Phosphotyrosine mark. The region spanning 446–526 (RHIQWALLRS…SVTLHHAGDE (81 aa)) is the AGC-kinase C-terminal domain. The segment at 499–526 (MHSSTPVNEQSNPFDSFSSVTLHHAGDE) is disordered. Residues 500–519 (HSSTPVNEQSNPFDSFSSVT) show a composition bias toward polar residues.

This sequence belongs to the protein kinase superfamily. AGC Ser/Thr protein kinase family.

The protein resides in the cytoplasm. It catalyses the reaction L-seryl-[protein] + ATP = O-phospho-L-seryl-[protein] + ADP + H(+). It carries out the reaction L-threonyl-[protein] + ATP = O-phospho-L-threonyl-[protein] + ADP + H(+). The sequence is that of Serine/threonine-protein kinase ppk22 (ppk22) from Schizosaccharomyces pombe (strain 972 / ATCC 24843) (Fission yeast).